Consider the following 158-residue polypeptide: Rhombotin-2 (158 aa).

2 LIM zinc-binding domains span residues 30–89 and 94–153; these read CGGC…RLFG and CASC…EWTK.

Interacts via its LIM domains with ELF2 and LDB1. Interacts with BEX2 and KDM5A. Also interacts with basic helix-loop-helix protein TAL1/SCL and can assemble in a complex with LMO2 and TAL1/SCL.

It is found in the nucleus. Its function is as follows. Acts with TAL1/SCL to regulate red blood cell development. Also acts with LDB1 to maintain erythroid precursors in an immature state. The polypeptide is Rhombotin-2 (LMO2) (Bos taurus (Bovine)).